We begin with the raw amino-acid sequence, 63 residues long: MGCGNSTATSAAAGRGKPGAVKDATEDSITEDDKRRNYGGVYVGLPSEAVNIASSQAKTVQKS.

Residues 1-10 are compositionally biased toward polar residues; sequence MGCGNSTATS. A disordered region spans residues 1-37; it reads MGCGNSTATSAAAGRGKPGAVKDATEDSITEDDKRRN.

Belongs to the OCC1 family.

In Rattus norvegicus (Rat), this protein is Overexpressed in colon carcinoma 1 protein homolog.